Here is a 78-residue protein sequence, read N- to C-terminus: Large ribosomal subunit protein bL28 (78 aa).

The tract at residues 1-21 (MSRVCQVTGKSPITGNNVSHA) is disordered. Positions 8 to 21 (TGKSPITGNNVSHA) are enriched in polar residues.

It belongs to the bacterial ribosomal protein bL28 family.

This Hahella chejuensis (strain KCTC 2396) protein is Large ribosomal subunit protein bL28.